The sequence spans 367 residues: Glutamate 5-kinase (367 aa).

Residue lysine 10 participates in ATP binding. Substrate is bound by residues serine 50, aspartate 137, and asparagine 149. Residues 169–170 (TD) and 211–217 (TGGMSTK) each bind ATP. Residues 275–353 (AGEITVDDGA…QQIAEILGYE (79 aa)) form the PUA domain.

It belongs to the glutamate 5-kinase family.

It is found in the cytoplasm. The enzyme catalyses L-glutamate + ATP = L-glutamyl 5-phosphate + ADP. It functions in the pathway amino-acid biosynthesis; L-proline biosynthesis; L-glutamate 5-semialdehyde from L-glutamate: step 1/2. Functionally, catalyzes the transfer of a phosphate group to glutamate to form L-glutamate 5-phosphate. The chain is Glutamate 5-kinase from Pectobacterium atrosepticum (strain SCRI 1043 / ATCC BAA-672) (Erwinia carotovora subsp. atroseptica).